The primary structure comprises 475 residues: Pup--protein ligase (475 aa).

Glutamate 19 contacts Mg(2+). Arginine 64 is an ATP binding site. Tyrosine 66 is a binding site for Mg(2+). Aspartate 68 functions as the Proton acceptor in the catalytic mechanism. Glutamate 74 is a Mg(2+) binding site. 2 residues coordinate ATP: threonine 77 and tryptophan 436.

Belongs to the Pup ligase/Pup deamidase family. Pup-conjugating enzyme subfamily.

It carries out the reaction ATP + [prokaryotic ubiquitin-like protein]-L-glutamate + [protein]-L-lysine = ADP + phosphate + N(6)-([prokaryotic ubiquitin-like protein]-gamma-L-glutamyl)-[protein]-L-lysine.. Its pathway is protein degradation; proteasomal Pup-dependent pathway. It functions in the pathway protein modification; protein pupylation. In terms of biological role, catalyzes the covalent attachment of the prokaryotic ubiquitin-like protein modifier Pup to the proteasomal substrate proteins, thereby targeting them for proteasomal degradation. This tagging system is termed pupylation. The ligation reaction involves the side-chain carboxylate of the C-terminal glutamate of Pup and the side-chain amino group of a substrate lysine. The protein is Pup--protein ligase of Corynebacterium aurimucosum (strain ATCC 700975 / DSM 44827 / CIP 107346 / CN-1) (Corynebacterium nigricans).